A 370-amino-acid polypeptide reads, in one-letter code: 4-hydroxy-3-methylbut-2-en-1-yl diphosphate synthase (flavodoxin) (370 aa).

4 residues coordinate [4Fe-4S] cluster: cysteine 270, cysteine 273, cysteine 305, and glutamate 312.

Belongs to the IspG family. [4Fe-4S] cluster serves as cofactor.

The catalysed reaction is (2E)-4-hydroxy-3-methylbut-2-enyl diphosphate + oxidized [flavodoxin] + H2O + 2 H(+) = 2-C-methyl-D-erythritol 2,4-cyclic diphosphate + reduced [flavodoxin]. The protein operates within isoprenoid biosynthesis; isopentenyl diphosphate biosynthesis via DXP pathway; isopentenyl diphosphate from 1-deoxy-D-xylulose 5-phosphate: step 5/6. Its function is as follows. Converts 2C-methyl-D-erythritol 2,4-cyclodiphosphate (ME-2,4cPP) into 1-hydroxy-2-methyl-2-(E)-butenyl 4-diphosphate. The polypeptide is 4-hydroxy-3-methylbut-2-en-1-yl diphosphate synthase (flavodoxin) (Saccharophagus degradans (strain 2-40 / ATCC 43961 / DSM 17024)).